The primary structure comprises 160 residues: Eukaryotic translation initiation factor 5A (160 aa).

Residues 1–12 show a composition bias toward basic and acidic residues; the sequence is MSDEEHHFESKA. The tract at residues 1-21 is disordered; that stretch reads MSDEEHHFESKADAGASKTFP. K52 is subject to Hypusine.

Belongs to the eIF-5A family. Lys-53 undergoes hypusination, a unique post-translational modification that consists in the addition of a butylamino group from spermidine to lysine side chain, leading to the formation of the unusual amino acid hypusine. eIF-5As are the only known proteins to undergo this modification, which is essential for their function.

Translation factor that promotes translation elongation and termination, particularly upon ribosome stalling at specific amino acid sequence contexts. Binds between the exit (E) and peptidyl (P) site of the ribosome and promotes rescue of stalled ribosome: specifically required for efficient translation of polyproline-containing peptides as well as other motifs that stall the ribosome. Acts as a ribosome quality control (RQC) cofactor by joining the RQC complex to facilitate peptidyl transfer during CAT tailing step. The protein is Eukaryotic translation initiation factor 5A of Manihot esculenta (Cassava).